We begin with the raw amino-acid sequence, 316 residues long: Transaldolase (316 aa).

Catalysis depends on K127, which acts as the Schiff-base intermediate with substrate.

This sequence belongs to the transaldolase family. Type 2 subfamily.

It localises to the cytoplasm. The enzyme catalyses D-sedoheptulose 7-phosphate + D-glyceraldehyde 3-phosphate = D-erythrose 4-phosphate + beta-D-fructose 6-phosphate. It functions in the pathway carbohydrate degradation; pentose phosphate pathway; D-glyceraldehyde 3-phosphate and beta-D-fructose 6-phosphate from D-ribose 5-phosphate and D-xylulose 5-phosphate (non-oxidative stage): step 2/3. Transaldolase is important for the balance of metabolites in the pentose-phosphate pathway. This is Transaldolase from Helicobacter pylori (strain P12).